We begin with the raw amino-acid sequence, 450 residues long: tRNA-2-methylthio-N(6)-dimethylallyladenosine synthase (450 aa).

The 117-residue stretch at 3–119 (RRYYITTFGC…LGELLEQVWN (117 aa)) folds into the MTTase N-terminal domain. 6 residues coordinate [4Fe-4S] cluster: cysteine 12, cysteine 48, cysteine 82, cysteine 154, cysteine 158, and cysteine 161. Residues 140–377 (RDSTVTAWVN…NHLVAKIAGD (238 aa)) enclose the Radical SAM core domain. Residues 380–444 (QRYLGREEVV…AFSLSGVPLA (65 aa)) enclose the TRAM domain.

Belongs to the methylthiotransferase family. MiaB subfamily. In terms of assembly, monomer. Requires [4Fe-4S] cluster as cofactor.

The protein resides in the cytoplasm. It carries out the reaction N(6)-dimethylallyladenosine(37) in tRNA + (sulfur carrier)-SH + AH2 + 2 S-adenosyl-L-methionine = 2-methylsulfanyl-N(6)-dimethylallyladenosine(37) in tRNA + (sulfur carrier)-H + 5'-deoxyadenosine + L-methionine + A + S-adenosyl-L-homocysteine + 2 H(+). Its function is as follows. Catalyzes the methylthiolation of N6-(dimethylallyl)adenosine (i(6)A), leading to the formation of 2-methylthio-N6-(dimethylallyl)adenosine (ms(2)i(6)A) at position 37 in tRNAs that read codons beginning with uridine. The polypeptide is tRNA-2-methylthio-N(6)-dimethylallyladenosine synthase (Thermosynechococcus vestitus (strain NIES-2133 / IAM M-273 / BP-1)).